Consider the following 271-residue polypeptide: Glutamate racemase (271 aa).

Substrate-binding positions include 10–11 and 42–43; these read DS and YG. Cysteine 73 (proton donor/acceptor) is an active-site residue. Residue 74-75 coordinates substrate; sequence NT. Catalysis depends on cysteine 183, which acts as the Proton donor/acceptor. Substrate is bound at residue 184–185; that stretch reads TH.

The protein belongs to the aspartate/glutamate racemases family.

It catalyses the reaction L-glutamate = D-glutamate. The protein operates within cell wall biogenesis; peptidoglycan biosynthesis. In terms of biological role, provides the (R)-glutamate required for cell wall biosynthesis. The sequence is that of Glutamate racemase from Streptococcus thermophilus (strain ATCC BAA-250 / LMG 18311).